A 543-amino-acid polypeptide reads, in one-letter code: CTP synthase (543 aa).

Residues 1–270 (MNNLTSTKFI…DTQILKHFNI (270 aa)) form an amidoligase domain region. Ser18 serves as a coordination point for CTP. Ser18 contacts UTP. Residues 19 to 24 (SLGKGL) and Asp76 contribute to the ATP site. The Mg(2+) site is built by Asp76 and Glu144. Residues 151-153 (DIE), 191-196 (KTKPTQ), and Lys227 contribute to the CTP site. UTP is bound by residues 191–196 (KTKPTQ) and Lys227. In terms of domain architecture, Glutamine amidotransferase type-1 spans 295–537 (TIAIIGKYIK…IQASLNYQET (243 aa)). Gly356 serves as a coordination point for L-glutamine. Residue Cys383 is the Nucleophile; for glutamine hydrolysis of the active site. Residues 384-387 (MGMQ), Glu407, and Arg462 each bind L-glutamine. Catalysis depends on residues His510 and Glu512.

Belongs to the CTP synthase family. As to quaternary structure, homotetramer.

It carries out the reaction UTP + L-glutamine + ATP + H2O = CTP + L-glutamate + ADP + phosphate + 2 H(+). The enzyme catalyses L-glutamine + H2O = L-glutamate + NH4(+). It catalyses the reaction UTP + NH4(+) + ATP = CTP + ADP + phosphate + 2 H(+). The protein operates within pyrimidine metabolism; CTP biosynthesis via de novo pathway; CTP from UDP: step 2/2. Allosterically activated by GTP, when glutamine is the substrate; GTP has no effect on the reaction when ammonia is the substrate. The allosteric effector GTP functions by stabilizing the protein conformation that binds the tetrahedral intermediate(s) formed during glutamine hydrolysis. Inhibited by the product CTP, via allosteric rather than competitive inhibition. Catalyzes the ATP-dependent amination of UTP to CTP with either L-glutamine or ammonia as the source of nitrogen. Regulates intracellular CTP levels through interactions with the four ribonucleotide triphosphates. The polypeptide is CTP synthase (Ehrlichia ruminantium (strain Gardel)).